A 208-amino-acid chain; its full sequence is Probable GTP-binding protein EngB (208 aa).

In terms of domain architecture, EngB-type G spans 18-187 (KQFEICVIGR…FALMKKVVIE (170 aa)). GTP is bound by residues 26–33 (GRSNVGKS), 52–56 (GRTQL), 69–72 (DLPG), 135–138 (NKVD), and 166–168 (VSA). Mg(2+)-binding residues include Ser-33 and Thr-54.

Belongs to the TRAFAC class TrmE-Era-EngA-EngB-Septin-like GTPase superfamily. EngB GTPase family. Requires Mg(2+) as cofactor.

Functionally, necessary for normal cell division and for the maintenance of normal septation. This Ureaplasma urealyticum serovar 10 (strain ATCC 33699 / Western) protein is Probable GTP-binding protein EngB.